We begin with the raw amino-acid sequence, 302 residues long: Nucleoside kinase (302 aa).

4 residues coordinate substrate: Asp-17, Gln-33, Gly-43, and Asn-47. Position 109 (Gln-109) interacts with ATP. Residues 111-113 and Gln-163 each bind substrate; that span reads TFF. ATP contacts are provided by residues Asn-186 and 214–219; that span reads TKGSKG. Asp-247 lines the substrate pocket. Residue Asp-247 is the Proton acceptor of the active site.

In terms of assembly, homodimer. The cofactor is Mg(2+). Requires Mn(2+) as cofactor.

It catalyses the reaction cytidine + ATP = CMP + ADP + H(+). It carries out the reaction guanosine + ATP = GMP + ADP + H(+). The enzyme catalyses inosine + ATP = IMP + ADP + H(+). Its function is as follows. Catalyzes the phosphorylation of a wide range of nucleosides to yield nucleoside monophosphates. Shows the highest activity for inosine, guanosine and cytidine, but very poor kinase activity with adenosine, thymidine, uridine and xanthosine. ATP is the best phosphate donor, but can also use ITP and GTP. Shows extremely low activity with fructose-6-phosphate. The polypeptide is Nucleoside kinase (Methanocaldococcus jannaschii (strain ATCC 43067 / DSM 2661 / JAL-1 / JCM 10045 / NBRC 100440) (Methanococcus jannaschii)).